A 381-amino-acid polypeptide reads, in one-letter code: 3-dehydroquinate synthase (381 aa).

NAD(+)-binding positions include E81–K86, G115–D119, T139–S140, K152, and K161. Zn(2+)-binding residues include E194, H256, and H274.

This sequence belongs to the sugar phosphate cyclases superfamily. Dehydroquinate synthase family. Co(2+) is required as a cofactor. The cofactor is Zn(2+). Requires NAD(+) as cofactor.

It is found in the cytoplasm. It carries out the reaction 7-phospho-2-dehydro-3-deoxy-D-arabino-heptonate = 3-dehydroquinate + phosphate. It functions in the pathway metabolic intermediate biosynthesis; chorismate biosynthesis; chorismate from D-erythrose 4-phosphate and phosphoenolpyruvate: step 2/7. In terms of biological role, catalyzes the conversion of 3-deoxy-D-arabino-heptulosonate 7-phosphate (DAHP) to dehydroquinate (DHQ). This is 3-dehydroquinate synthase from Rhodopseudomonas palustris (strain ATCC BAA-98 / CGA009).